A 226-amino-acid polypeptide reads, in one-letter code: 7-cyano-7-deazaguanine synthase (226 aa).

Position 8–18 (8–18) interacts with ATP; that stretch reads ISGGLDSTTCL. 4 residues coordinate Zn(2+): cysteine 188, cysteine 198, cysteine 201, and cysteine 204.

Belongs to the QueC family. Requires Zn(2+) as cofactor.

The catalysed reaction is 7-carboxy-7-deazaguanine + NH4(+) + ATP = 7-cyano-7-deazaguanine + ADP + phosphate + H2O + H(+). The protein operates within purine metabolism; 7-cyano-7-deazaguanine biosynthesis. Catalyzes the ATP-dependent conversion of 7-carboxy-7-deazaguanine (CDG) to 7-cyano-7-deazaguanine (preQ(0)). The polypeptide is 7-cyano-7-deazaguanine synthase (Coxiella burnetii (strain RSA 493 / Nine Mile phase I)).